A 72-amino-acid chain; its full sequence is Sperm protein associated with the nucleus on the X chromosome N1 (72 aa).

A disordered region spans residues Met-1 to Lys-44.

This sequence belongs to the SPAN-X family.

In Homo sapiens (Human), this protein is Sperm protein associated with the nucleus on the X chromosome N1 (SPANXN1).